The chain runs to 732 residues: Catalase-peroxidase (732 aa).

Positions 1-20 are disordered; it reads MDKDSKRPVVGSTVRGGMSN. The tryptophyl-tyrosyl-methioninium (Trp-Tyr) (with M-246) cross-link spans 92-220; the sequence is WHSAGTYRMG…LAAVQMGLIY (129 aa). Histidine 93 (proton acceptor) is an active-site residue. Residues 220 to 246 constitute a cross-link (tryptophyl-tyrosyl-methioninium (Tyr-Met) (with W-92)); that stretch reads YVNPEGPDGNPDPVAAGYDVIETFARM. Histidine 261 lines the heme b pocket.

It belongs to the peroxidase family. Peroxidase/catalase subfamily. In terms of assembly, homodimer or homotetramer. Heme b serves as cofactor. Formation of the three residue Trp-Tyr-Met cross-link is important for the catalase, but not the peroxidase activity of the enzyme.

The catalysed reaction is H2O2 + AH2 = A + 2 H2O. It carries out the reaction 2 H2O2 = O2 + 2 H2O. In terms of biological role, bifunctional enzyme with both catalase and broad-spectrum peroxidase activity. This chain is Catalase-peroxidase, found in Desulfosudis oleivorans (strain DSM 6200 / JCM 39069 / Hxd3) (Desulfococcus oleovorans).